A 1025-amino-acid polypeptide reads, in one-letter code: Multidrug resistance protein MdtC (1025 aa).

The next 12 membrane-spanning stretches (helical) occupy residues 3-23, 333-353, 360-380, 387-407, 431-451, 469-489, 528-548, 853-873, 875-895, 897-917, 953-973, and 984-1004; these read FFALFIYRPVATILLSVAITL, EVEQTLIISVALVILVVFLFL, IIPAVSVPVSLIGTFAAMYLC, LSLMALTIATGFVVDDAIVVL, VGFTVLSMSLSLVAVFLPLLL, VAIGISLLVSLTLTPMMCGWM, LVGVVLLGTIALNIWLYISIP, VILIIAAIATVYIVLGILYES, VHPLTILSTLPSAGVGALLAL, LFNAPFSLIALIGIMLLIGIV, PIMMTTLAALFGALPLVLSGG, and ITIVGGLVMSQLLTLYTTPVV.

The protein belongs to the resistance-nodulation-cell division (RND) (TC 2.A.6) family. MdtC subfamily. As to quaternary structure, part of a tripartite efflux system composed of MdtA, MdtB and MdtC. MdtC forms a heteromultimer with MdtB.

Its subcellular location is the cell inner membrane. Its function is as follows. The MdtABC tripartite complex confers resistance against novobiocin and deoxycholate. The polypeptide is Multidrug resistance protein MdtC (Escherichia coli O9:H4 (strain HS)).